We begin with the raw amino-acid sequence, 344 residues long: N-acetyl-gamma-glutamyl-phosphate reductase (344 aa).

Residue Cys150 is part of the active site.

This sequence belongs to the NAGSA dehydrogenase family. Type 1 subfamily.

It is found in the cytoplasm. The catalysed reaction is N-acetyl-L-glutamate 5-semialdehyde + phosphate + NADP(+) = N-acetyl-L-glutamyl 5-phosphate + NADPH + H(+). It participates in amino-acid biosynthesis; L-arginine biosynthesis; N(2)-acetyl-L-ornithine from L-glutamate: step 3/4. Functionally, catalyzes the NADPH-dependent reduction of N-acetyl-5-glutamyl phosphate to yield N-acetyl-L-glutamate 5-semialdehyde. This chain is N-acetyl-gamma-glutamyl-phosphate reductase, found in Pseudomonas putida (strain W619).